An 80-amino-acid polypeptide reads, in one-letter code: Lantibiotic Flvalpha.b (80 aa).

A propeptide spans 1 to 38 (cleaved by FlvT); that stretch reads MNKNPIYRSEEEAKNIACGNVAAELDENSQALDAINGA. 2,3-didehydrobutyrine; by FlvM1 is present on residues threonine 43 and threonine 47. Positions 52 to 55 form a cross-link, beta-methyllanthionine (Thr-Cys); by FlvM1; the sequence is TVGC. A cross-link (lanthionine (Ser-Cys); by FlvM1) is located at residues 58–68; sequence SYGLGNGGYCC. 2 cross-links (beta-methyllanthionine (Thr-Cys); by FlvM1) span residues 69–74 and 71–78; these read TYTVEC and TVECSKTC.

Post-translationally, the lanthionine formed by Ser-58 and Cys-68 forms a putative lipid II binding motif. Maturation of FlvA1 peptides involves the enzymatic conversion of Thr, and Ser into dehydrated AA and the formation of thioether bonds with cysteines. Modifications are processed by the flavecin synthetase FlvM1. This is followed by membrane translocation and cleavage of the modified precursor. In terms of processing, contains DL-lanthionine and DL-beta-methyllanthionine, when coepressed in E.coli with the flavecin synthetase FlvM1.

It is found in the secreted. In terms of biological role, lanthionine-containing peptide antibiotic (lantibiotic) only active on Gram-positive bacteria in synergy with Flvbeta peptides, which are encoded by the same operon than Flvalpha.a. Shows antibacterial activity in synergy with Flvbeta.b, Flvbeta.c, Flvbeta.e and Flvbeta.g. Does not show antibacterial activity when tested with Flvbeta.a, Flvbeta.d, Flvbeta.f and Flvbeta.h. The bactericidal activity of lantibiotics is based on depolarization of energized bacterial cytoplasmic membranes, initiated by the formation of aqueous transmembrane pores. The protein is Lantibiotic Flvalpha.b of Ruminococcus flavefaciens.